The sequence spans 267 residues: tRNA pseudouridine synthase A (267 aa).

The active-site Nucleophile is aspartate 51. Tyrosine 109 serves as a coordination point for substrate.

The protein belongs to the tRNA pseudouridine synthase TruA family. In terms of assembly, homodimer.

It carries out the reaction uridine(38/39/40) in tRNA = pseudouridine(38/39/40) in tRNA. Formation of pseudouridine at positions 38, 39 and 40 in the anticodon stem and loop of transfer RNAs. This chain is tRNA pseudouridine synthase A, found in Staphylococcus saprophyticus subsp. saprophyticus (strain ATCC 15305 / DSM 20229 / NCIMB 8711 / NCTC 7292 / S-41).